Consider the following 759-residue polypeptide: Xaa-Pro dipeptidyl-peptidase (759 aa).

Active-site charge relay system residues include serine 347, aspartate 467, and histidine 497.

This sequence belongs to the peptidase S15 family. Homodimer.

It is found in the cytoplasm. It carries out the reaction Hydrolyzes Xaa-Pro-|- bonds to release unblocked, N-terminal dipeptides from substrates including Ala-Pro-|-p-nitroanilide and (sequentially) Tyr-Pro-|-Phe-Pro-|-Gly-Pro-|-Ile.. Functionally, removes N-terminal dipeptides sequentially from polypeptides having unsubstituted N-termini provided that the penultimate residue is proline. The chain is Xaa-Pro dipeptidyl-peptidase from Streptococcus gordonii (strain Challis / ATCC 35105 / BCRC 15272 / CH1 / DL1 / V288).